Consider the following 394-residue polypeptide: MNKYKRIFLVVMDSVGIGEAPDAEQFGDLGSDTIGHIAEHMNGLQMPNMVKLGLGNIREMKGISKVEKPLGYYTKMQEKSTGKDTMTGHWEIMGLYIDTPFQVFPEGFPKELLDELEEKTGRKIIGNKPASGTEILDELGQEQMETGSLIVYTSADSVLQIAAHEEVVPLDELYKICKIARELTLDEKYMVGRVIARPFVGEPGNFTRTPNRHDYALKPFGRTVMNELKDSDYDVIAIGKISDIYDGEGVTESLRTKSNMDGMDKLVDTLNMDFTGLSFLNLVDFDALFGHRRDPQGYGEALQEYDARLPEVFEKLKEDDLLLITADHGNDPVHHGTDHTREYVPLLAYSPSMKEGGQELPLRQTFADIGATVAENFGVKMPEYGTSFLNELKK.

Positions 13, 286, 291, 327, 328, and 339 each coordinate Mn(2+).

The protein belongs to the phosphopentomutase family. The cofactor is Mn(2+).

The protein resides in the cytoplasm. The catalysed reaction is 2-deoxy-alpha-D-ribose 1-phosphate = 2-deoxy-D-ribose 5-phosphate. It carries out the reaction alpha-D-ribose 1-phosphate = D-ribose 5-phosphate. It participates in carbohydrate degradation; 2-deoxy-D-ribose 1-phosphate degradation; D-glyceraldehyde 3-phosphate and acetaldehyde from 2-deoxy-alpha-D-ribose 1-phosphate: step 1/2. In terms of biological role, isomerase that catalyzes the conversion of deoxy-ribose 1-phosphate (dRib-1-P) and ribose 1-phosphate (Rib-1-P) to deoxy-ribose 5-phosphate (dRib-5-P) and ribose 5-phosphate (Rib-5-P), respectively. This Bacillus cereus (strain AH187) protein is Phosphopentomutase.